The sequence spans 335 residues: MMRIAVDAMGGDHAPAEIVKGALRSIEQFDIEVILVGQPERIKEFLPQGEVPARVRIKEATEVVEMDEHPAQAVRRKKDSSIVVATRLVKEGEADALVSAGSTGAQMAASLLGLGRIKGIDRPAIVTVLPTLEGGKLLLDVGANPDAKPEHLVQYAMMGSIYAESILGIQNPKVGLLNIGTEETKGNELTQATYPLLQKAPLNFIGNVEGRAIPYGQAADVVVCEGFVGNVVLKTTEGLAGALFQLIKEKITATPLRKLGALAIKPGLKEIAKMMDYAEYGGAPLLGVHGISIISHGSSNEKAIFNAIRVAKECVESGFIEEIKKELPRFTAAQE.

Belongs to the PlsX family. In terms of assembly, homodimer. Probably interacts with PlsY.

Its subcellular location is the cytoplasm. It catalyses the reaction a fatty acyl-[ACP] + phosphate = an acyl phosphate + holo-[ACP]. It participates in lipid metabolism; phospholipid metabolism. Functionally, catalyzes the reversible formation of acyl-phosphate (acyl-PO(4)) from acyl-[acyl-carrier-protein] (acyl-ACP). This enzyme utilizes acyl-ACP as fatty acyl donor, but not acyl-CoA. The polypeptide is Phosphate acyltransferase (Desulfitobacterium hafniense (strain Y51)).